The primary structure comprises 277 residues: 2-dehydro-3-deoxyphosphooctonate aldolase (277 aa).

Belongs to the KdsA family.

The protein resides in the cytoplasm. It catalyses the reaction D-arabinose 5-phosphate + phosphoenolpyruvate + H2O = 3-deoxy-alpha-D-manno-2-octulosonate-8-phosphate + phosphate. It participates in carbohydrate biosynthesis; 3-deoxy-D-manno-octulosonate biosynthesis; 3-deoxy-D-manno-octulosonate from D-ribulose 5-phosphate: step 2/3. The protein operates within bacterial outer membrane biogenesis; lipopolysaccharide biosynthesis. The polypeptide is 2-dehydro-3-deoxyphosphooctonate aldolase (Brucella anthropi (strain ATCC 49188 / DSM 6882 / CCUG 24695 / JCM 21032 / LMG 3331 / NBRC 15819 / NCTC 12168 / Alc 37) (Ochrobactrum anthropi)).